We begin with the raw amino-acid sequence, 254 residues long: 5'-methylthioadenosine/S-adenosylhomocysteine nucleosidase (254 aa).

Met1 is subject to N-acetylmethionine. Glu25 (proton acceptor) is an active-site residue. S-methyl-5'-thioadenosine is bound by residues Thr103 and 186-189 (KDME). 2 residues coordinate adenine: Lys186 and Asp212. The active-site Proton donor is the Asp212.

It belongs to the PNP/UDP phosphorylase family. MtnN subfamily. In terms of assembly, homodimer.

It carries out the reaction S-methyl-5'-thioadenosine + H2O = 5-(methylsulfanyl)-D-ribose + adenine. The enzyme catalyses S-adenosyl-L-homocysteine + H2O = S-(5-deoxy-D-ribos-5-yl)-L-homocysteine + adenine. It catalyses the reaction 5'-deoxyadenosine + H2O = 5-deoxy-D-ribose + adenine. It functions in the pathway amino-acid biosynthesis; L-methionine biosynthesis via salvage pathway; S-methyl-5-thio-alpha-D-ribose 1-phosphate from S-methyl-5'-thioadenosine (hydrolase route): step 1/2. Functionally, enzyme of the methionine cycle that catalyzes the irreversible cleavage of the glycosidic bond in 5'-methylthioadenosine (MTA) and S-adenosylhomocysteine (SAH/AdoHcy) to a lesser extent, to adenine and the corresponding thioribose, 5'-methylthioribose and S-ribosylhomocysteine, respectively. Contributes to the maintenance of AdoMet homeostasis and is required to sustain high rates of ethylene synthesis. The polypeptide is 5'-methylthioadenosine/S-adenosylhomocysteine nucleosidase (MTN2) (Arabidopsis thaliana (Mouse-ear cress)).